The sequence spans 292 residues: NAD kinase (292 aa).

Asp-73 serves as the catalytic Proton acceptor. NAD(+) contacts are provided by residues 73–74 (DG), 147–148 (NE), His-158, Arg-175, Asp-177, 188–193 (TAYSLS), and Gln-247.

It belongs to the NAD kinase family. Requires a divalent metal cation as cofactor.

It is found in the cytoplasm. It carries out the reaction NAD(+) + ATP = ADP + NADP(+) + H(+). Functionally, involved in the regulation of the intracellular balance of NAD and NADP, and is a key enzyme in the biosynthesis of NADP. Catalyzes specifically the phosphorylation on 2'-hydroxyl of the adenosine moiety of NAD to yield NADP. The sequence is that of NAD kinase from Enterobacter sp. (strain 638).